The following is a 509-amino-acid chain: MIMKTIKEINEKIKKGEAVVVTAEEMIKIVEEEGAKRAADYVDVVTTGTFGAMCSSGVFINFGHSDPPIKMLRIYLNNVEAYGGLAAVDAYIGAAQPNEDPDVDIDYGGAHVIEDLVRGKEVELYAEGYTTDCYPRKEVNVRITLDDVNQAIMVNPRNCYQTYAAATNSREEKIYTYMGILLPEYNNVHYSGAGQLNPLQNDYNPETKSFNTIGIGTRIFLGGGIGYVIGEGTQHNPPFGTLMVKGDLKQMNPKFIRAATMPRYGSTLYVGIGIPIPVLNEKIAERCAIRDEDIEVPIYDYGFPRRDRPLIAKTNYKVLRSGKITLNVNIDGKDVEKTVKTGSVSSYKMAREVAETLKQWILDGKFLLTERVDTLGRAENKPMKSPITLVKDILSKPPITAHSNISIMEAAKILIKHNINHLPIVDEHGKLVGIITSWDIAKALAQNKKTIEEIMTRNVITAHEDEPVDHVAIKMSKYNISGVPVVDDYRRVVGIVTSEDISRLFGGKK.

The Cysteine persulfide intermediate role is filled by Cys133. 2 consecutive CBS domains span residues 394 to 450 and 455 to 509; these read LSKP…NKKT and MTRN…GGKK. S-methyl-5'-thioadenosine contacts are provided by Ser395, Ile399, and His421. Residues Asp439, Thr456, Ile460, and 479–482 each bind S-adenosyl-L-methionine; that span reads NISG. An S-methyl-5'-thioadenosine-binding site is contributed by 497–500; it reads TSED.

Belongs to the L-aspartate semialdehyde sulfurtransferase family. Homodimer. May form a complex with MJ0099.

It catalyses the reaction L-aspartate 4-semialdehyde + reduced 2[4Fe-4S]-[ferredoxin] + hydrogen sulfide + 3 H(+) = oxidized 2[4Fe-4S]-[ferredoxin] + L-homocysteine + H2O. The protein operates within amino-acid biosynthesis. The ligand-induced conformational reorganization of the protein could be an important regulatory mechanism. Its function is as follows. Required for O-acetylhomoserine sulfhydrylase (OAHS)-independent homocysteine (Hcy) biosynthesis. Together with MJ0099, catalyzes the condensation of sulfide with aspartate semialdehyde to generate homocysteine. Likely functions through persulfide intermediate. This chain is L-aspartate semialdehyde sulfurtransferase, found in Methanocaldococcus jannaschii (strain ATCC 43067 / DSM 2661 / JAL-1 / JCM 10045 / NBRC 100440) (Methanococcus jannaschii).